We begin with the raw amino-acid sequence, 37 residues long: Translationally-controlled tumor protein homolog (37 aa).

The 37-residue stretch at 1-37 (MKIFRDILTNAEVVXDNDKPMDVLDEIVYAXQGRYIE) folds into the TCTP domain.

This sequence belongs to the TCTP family. In terms of assembly, monomer.

It localises to the cytoplasm. Functionally, binds calcium; exact function not known. This Trypanosoma brucei brucei protein is Translationally-controlled tumor protein homolog.